Reading from the N-terminus, the 31-residue chain is Cyclotide mden-L (31 aa).

The segment at residues 1-31 is a cross-link (cyclopeptide (Gly-Asn)); that stretch reads GSIPCGESCVYIPCISAVLGCSCKNKVCYRN. 3 cysteine pairs are disulfide-bonded: cysteine 5-cysteine 21, cysteine 9-cysteine 23, and cysteine 14-cysteine 28.

The protein belongs to the cyclotide family. Bracelet subfamily. In terms of processing, this is a cyclic peptide.

Functionally, probably participates in a plant defense mechanism. In Melicytus dentatus (Tree violet), this protein is Cyclotide mden-L.